We begin with the raw amino-acid sequence, 451 residues long: MKKLISFDYSKALPFIHPHEIEYMEKHAKLSLEMVLKANAQGNGFLGWVNLPRDYDRAEFERIKKAAHKIQSDSDVLVVIGIGGSYLGARAAIEMLSHSFYNLLPKGKRNTPEIYFAGNSISSTYLKDLLELIADKEVSINVISKSGTTTEPAIAFRVFRDFMEKKYGKDKARSRIYVTTDREKGALKKLADSEGYETFVIPDDVGGRYSVLTAVGLLPIAVAGINIDEMMEGAYEASTVYTKEDLSENISMQYAILRNILYRKGKAIEILVNYEPRLHYFAEWWKQLFGESEGKDQKGIYPASVDFTTDLHSMGQFIQEGSRNIFETVLNVEKPAKDIIINEDRDNIDGLNFLAGKTIDFVNKKAFEGTLLAHTDGGVPNLVVNIPEITPFYFGNLVYFFEMACAISGYINGVNPFDQPGVEAYKKNMFALLGRPGFEKEREELERRLRG.

Residue Glu291 is the Proton donor of the active site. Active-site residues include His312 and Lys426.

This sequence belongs to the GPI family.

It localises to the cytoplasm. The catalysed reaction is alpha-D-glucose 6-phosphate = beta-D-fructose 6-phosphate. The protein operates within carbohydrate biosynthesis; gluconeogenesis. It participates in carbohydrate degradation; glycolysis; D-glyceraldehyde 3-phosphate and glycerone phosphate from D-glucose: step 2/4. Catalyzes the reversible isomerization of glucose-6-phosphate to fructose-6-phosphate. The polypeptide is Glucose-6-phosphate isomerase (Caldanaerobacter subterraneus subsp. tengcongensis (strain DSM 15242 / JCM 11007 / NBRC 100824 / MB4) (Thermoanaerobacter tengcongensis)).